A 175-amino-acid polypeptide reads, in one-letter code: Peptide methionine sulfoxide reductase MsrA (175 aa).

The active site involves C10.

Belongs to the MsrA Met sulfoxide reductase family.

It catalyses the reaction L-methionyl-[protein] + [thioredoxin]-disulfide + H2O = L-methionyl-(S)-S-oxide-[protein] + [thioredoxin]-dithiol. The enzyme catalyses [thioredoxin]-disulfide + L-methionine + H2O = L-methionine (S)-S-oxide + [thioredoxin]-dithiol. Its function is as follows. Has an important function as a repair enzyme for proteins that have been inactivated by oxidation. Catalyzes the reversible oxidation-reduction of methionine sulfoxide in proteins to methionine. The polypeptide is Peptide methionine sulfoxide reductase MsrA (Psychrobacter sp. (strain PRwf-1)).